The following is a 178-amino-acid chain: NADH-quinone oxidoreductase subunit I (178 aa).

4Fe-4S ferredoxin-type domains lie at 45 to 74 and 90 to 119; these read RHPD…VEAA and KVYE…LGNE. The [4Fe-4S] cluster site is built by C54, C57, C60, C64, C99, C102, C105, and C109.

The protein belongs to the complex I 23 kDa subunit family. As to quaternary structure, NDH-1 is composed of 15 different subunits. Subunits NuoA, H, J, K, L, M, N constitute the membrane sector of the complex. Requires [4Fe-4S] cluster as cofactor.

It is found in the cell membrane. The catalysed reaction is a quinone + NADH + 5 H(+)(in) = a quinol + NAD(+) + 4 H(+)(out). Its function is as follows. NDH-1 shuttles electrons from NADH, via FMN and iron-sulfur (Fe-S) centers, to quinones in the respiratory chain. The immediate electron acceptor for the enzyme in this species is believed to be ubiquinone. Couples the redox reaction to proton translocation (for every two electrons transferred, four hydrogen ions are translocated across the cytoplasmic membrane), and thus conserves the redox energy in a proton gradient. This Deinococcus radiodurans (strain ATCC 13939 / DSM 20539 / JCM 16871 / CCUG 27074 / LMG 4051 / NBRC 15346 / NCIMB 9279 / VKM B-1422 / R1) protein is NADH-quinone oxidoreductase subunit I.